The sequence spans 728 residues: Bacteriophytochrome (728 aa).

Cysteine 12 contributes to the a tetrapyrrole binding site. The tract at residues 17–495 is chromophore binding domain; that stretch reads IHVPGAIQPH…RLDLMELCLN (479 aa). The region spanning 139–303 is the GAF domain; it reads DTASLLSNVT…IFSQVCSAIV (165 aa). The 212-residue stretch at 510–721 folds into the Histidine kinase domain; that stretch reads VLGHDLRNPL…TFCLRLPVRQ (212 aa). Histidine 513 carries the phosphohistidine; by autocatalysis modification.

It in the N-terminal section; belongs to the phytochrome family. In terms of processing, contains one covalently linked tetrapyrrole chromophore.

The enzyme catalyses ATP + protein L-histidine = ADP + protein N-phospho-L-histidine.. Photoreceptor which exists in two forms that are reversibly interconvertible by light: the R form that absorbs maximally in the red region of the spectrum and the FR form that absorbs maximally in the far-red region. This chain is Bacteriophytochrome (bphP), found in Pseudomonas aeruginosa (strain ATCC 15692 / DSM 22644 / CIP 104116 / JCM 14847 / LMG 12228 / 1C / PRS 101 / PAO1).